Here is a 1951-residue protein sequence, read N- to C-terminus: [F-actin]-monooxygenase MICAL2 (1951 aa).

A monooxygenase domain region spans residues Gly-2–Asp-494. Residues Cys-97, Glu-116–Arg-118, Arg-123–Asn-125, Phe-183, Tyr-298, and Asp-398 contribute to the FAD site. Residues Asp-516–Glu-619 form the Calponin-homology (CH) domain. Ser-631 carries the post-translational modification Phosphoserine. Positions Arg-660–Gln-681 match the Nuclear localization signal motif. Disordered regions lie at residues Thr-663–Lys-712 and Lys-891–Ser-921. The segment covering Ser-691 to Ser-700 has biased composition (low complexity). Residues Ala-896–His-909 are compositionally biased toward pro residues. Residues Pro-910–Ser-921 are compositionally biased toward low complexity. An LIM zinc-binding domain is found at Asp-991–Ser-1053. The Zn(2+) site is built by Cys-993, Cys-996, His-1014, Cys-1017, Cys-1020, Cys-1023, Cys-1043, and His-1046. Thr-1052 carries the phosphoserine modification. 10 disordered regions span residues Ser-1054 to Pro-1141, Thr-1158 to Thr-1314, Val-1348 to Gln-1368, Ile-1383 to Gly-1427, His-1451 to Ser-1476, Gln-1489 to Ala-1580, Ala-1594 to Pro-1624, Gly-1678 to Leu-1697, Ser-1706 to Gly-1731, and Pro-1747 to Ser-1766. Residues Ala-1061–Glu-1070 are compositionally biased toward basic and acidic residues. Composition is skewed to polar residues over residues Pro-1129 to Arg-1138, His-1228 to Gln-1239, and Gln-1246 to Ala-1256. Over residues Pro-1257 to Ser-1268 the composition is skewed to pro residues. Low complexity predominate over residues Leu-1269–Pro-1285. Residues Asp-1291 to Ile-1306 are compositionally biased toward polar residues. Residues Thr-1314–Glu-1353 are interaction with MAPK1. Positions Pro-1350–Glu-1359 are enriched in basic and acidic residues. The span at Glu-1532 to Thr-1545 shows a compositional bias: basic and acidic residues. Low complexity predominate over residues Leu-1599 to Ser-1616. The span at Gly-1678–Gly-1688 shows a compositional bias: basic and acidic residues. Phosphoserine is present on Ser-1683. Residues Ser-1706–Gln-1720 are compositionally biased toward polar residues. Low complexity predominate over residues Thr-1749–Ser-1759. In terms of domain architecture, bMERB spans Lys-1789–Asn-1939.

Belongs to the Mical family. As to quaternary structure, interacts with PLXNA4. Interacts with RAB1B. Interacts with MAPK1/ERK2. Interacts with RAB1B, RAB35, RAB8A, RAB10, RAB13 and RAB15 (in their GTP-bound forms); binding to RAB1B and RAB35 is of low affinity compared to other Rab proteins; binding to RAB1B and RAB35 is of low affinity compared to other Rab proteins; at least in case of RAB8A may bind 2 molecules of RAB8A simultaneously through a high and a low affinity binding site, respectively. FAD is required as a cofactor. As to expression, expressed only in testis (at protein level).

The protein resides in the cytoplasm. The protein localises to the nucleus. The catalysed reaction is L-methionyl-[F-actin] + NADPH + O2 + H(+) = L-methionyl-(R)-S-oxide-[F-actin] + NADP(+) + H2O. Methionine monooxygenase that promotes depolymerization of F-actin by mediating oxidation of residues 'Met-44' and 'Met-47' on actin to form methionine-sulfoxide, resulting in actin filament disassembly and preventing repolymerization. Regulates the disassembly of branched actin networks also by oxidizing ARP3B-containing ARP2/3 complexes leading to ARP3B dissociation from the network. Acts as a key regulator of the SRF signaling pathway elicited by nerve growth factor and serum: mediates oxidation and subsequent depolymerization of nuclear actin, leading to increase MKL1/MRTF-A presence in the nucleus and promote SRF:MKL1/MRTF-A-dependent gene transcription. Does not activate SRF:MKL1/MRTF-A through RhoA. The polypeptide is [F-actin]-monooxygenase MICAL2 (Mus musculus (Mouse)).